Reading from the N-terminus, the 183-residue chain is uncharacterized protein (183 aa).

Positions 1-23 (MSAFKKSLLVAGVAMILSNNVFA) are cleaved as a signal peptide. Cys41 and Cys80 are joined by a disulfide.

The protein belongs to the fimbrial protein family.

Its subcellular location is the fimbrium. This is an uncharacterized protein from Escherichia coli (strain K12).